Consider the following 387-residue polypeptide: GTPase Obg (387 aa).

In terms of domain architecture, Obg spans 1–159 (MKFVDEAIIR…RSLKLELLLL (159 aa)). The region spanning 160 to 333 (ADVGLLGMPN…LAVKLLDFIA (174 aa)) is the OBG-type G domain. Residues 166–173 (GMPNAGKS), 191–195 (FTTLV), 213–216 (DIPG), 283–286 (NKAD), and 314–316 (SAY) each bind GTP. Residues S173 and T193 each contribute to the Mg(2+) site.

It belongs to the TRAFAC class OBG-HflX-like GTPase superfamily. OBG GTPase family. As to quaternary structure, monomer. Requires Mg(2+) as cofactor.

It localises to the cytoplasm. An essential GTPase which binds GTP, GDP and possibly (p)ppGpp with moderate affinity, with high nucleotide exchange rates and a fairly low GTP hydrolysis rate. Plays a role in control of the cell cycle, stress response, ribosome biogenesis and in those bacteria that undergo differentiation, in morphogenesis control. This chain is GTPase Obg, found in Shewanella halifaxensis (strain HAW-EB4).